We begin with the raw amino-acid sequence, 848 residues long: Adenylate cyclase (848 aa).

The catalytic stretch occupies residues 1 to 535 (MYLYIETLKQ…DVSHHFPLRL (535 aa)). The interval 541 to 848 (KALYSPCEIR…DTPLLQQYFS (308 aa)) is regulatory. His-609 carries the phosphohistidine; by CRR modification.

Belongs to the adenylyl cyclase class-1 family.

The protein resides in the cytoplasm. The catalysed reaction is ATP = 3',5'-cyclic AMP + diphosphate. This Escherichia coli O157:H7 protein is Adenylate cyclase (cyaA).